A 966-amino-acid chain; its full sequence is Leucine--tRNA ligase (966 aa).

The 'HIGH' region motif lies at 41 to 51 (PYLNGNLHAGH). The short motif at 632–636 (KMSKS) is the 'KMSKS' region element. Lysine 635 contributes to the ATP binding site.

Belongs to the class-I aminoacyl-tRNA synthetase family.

Its subcellular location is the cytoplasm. It carries out the reaction tRNA(Leu) + L-leucine + ATP = L-leucyl-tRNA(Leu) + AMP + diphosphate. The protein is Leucine--tRNA ligase of Methanosarcina mazei (strain ATCC BAA-159 / DSM 3647 / Goe1 / Go1 / JCM 11833 / OCM 88) (Methanosarcina frisia).